Consider the following 90-residue polypeptide: MATSAAAVQEDPATNFAKDQLRAIIERIERLEEEKKTISDDIRDVYAEAKGNGFDVKALRTIVRMRKQDANERAEQETILETYMQALGML.

This sequence belongs to the UPF0335 family.

The chain is UPF0335 protein RPA4190 from Rhodopseudomonas palustris (strain ATCC BAA-98 / CGA009).